Here is a 104-residue protein sequence, read N- to C-terminus: Protein SMALL AUXIN UP-REGULATED RNA 12 (104 aa).

The protein belongs to the ARG7 family. Expressed in flowers and etiolated hypocotyls.

Its subcellular location is the cell membrane. In terms of biological role, provide a mechanistic link between auxin and plasma membrane H(+)-ATPases (PM H(+)-ATPases, e.g. AHA1 and AHA2), and triggers PM H(+)-ATPases activity by promoting phosphorylation of their C-terminal autoinhibitory domain as a result of PP2C-D subfamily of type 2C phosphatases inhibition, thus leading to the acidification of the apoplast and the facilitation of solutes and water uptake to drive cell expansion. Triggers plant growth probably by promoting cell elongation. Regulates branch angles and bending. The chain is Protein SMALL AUXIN UP-REGULATED RNA 12 from Arabidopsis thaliana (Mouse-ear cress).